The sequence spans 736 residues: RNA-binding protein RMD9-like, mitochondrial (736 aa).

Disordered stretches follow at residues 1–28, 124–148, and 566–618; these read MFRF…KTNS, PRRS…HPNT, and NRGI…GTPV. The N-terminal 79 residues, 1–79, are a transit peptide targeting the mitochondrion; the sequence is MFRFAQPANV…HFKNQFSSRN (79 aa). The span at 125-140 shows a compositional bias: low complexity; that stretch reads RRSNMRNNGNNNMNNG. Residues 566 to 578 are compositionally biased toward polar residues; it reads NRGISSSSPMSAV. Residues 579-596 show a composition bias toward low complexity; it reads NSLAPSTTNTPSPSLSPI. Over residues 602-613 the composition is skewed to polar residues; it reads LSSARNTPNKIW.

Belongs to the RMD9 family. In terms of assembly, monomer. In terms of processing, phosphorylated. Phosphorylation promotes binding to RNA.

The protein resides in the mitochondrion inner membrane. Its function is as follows. May be involved in the processing or stability of mitochondrial mRNAs. In Candida glabrata (strain ATCC 2001 / BCRC 20586 / JCM 3761 / NBRC 0622 / NRRL Y-65 / CBS 138) (Yeast), this protein is RNA-binding protein RMD9-like, mitochondrial.